The primary structure comprises 162 residues: Probable chemoreceptor glutamine deamidase CheD (162 aa).

It belongs to the CheD family.

The enzyme catalyses L-glutaminyl-[protein] + H2O = L-glutamyl-[protein] + NH4(+). Functionally, probably deamidates glutamine residues to glutamate on methyl-accepting chemotaxis receptors (MCPs), playing an important role in chemotaxis. The protein is Probable chemoreceptor glutamine deamidase CheD of Clostridium botulinum (strain ATCC 19397 / Type A).